The following is a 1085-amino-acid chain: RecBCD enzyme subunit RecC (1085 aa).

Belongs to the RecC family. In terms of assembly, heterotrimer of RecB, RecC and RecD. All subunits contribute to DNA-binding.

Its function is as follows. A helicase/nuclease that prepares dsDNA breaks (DSB) for recombinational DNA repair. Binds to DSBs and unwinds DNA via a highly rapid and processive ATP-dependent bidirectional helicase activity. Holoenzyme degrades any linearized DNA that is unable to undergo homologous recombination. In the holoenzyme this subunit recognizes the wild-type Chi sequence, and when added to isolated RecB increases its ATP-dependent helicase processivity. Unlike the case in E.coli, suppresses RecA-dependent homologous recombination, is instead required for single-strand annealing pathway repair of DSB. The sequence is that of RecBCD enzyme subunit RecC from Mycolicibacterium smegmatis (strain ATCC 700084 / mc(2)155) (Mycobacterium smegmatis).